The chain runs to 155 residues: 6,7-dimethyl-8-ribityllumazine synthase (155 aa).

Residues Phe-24, 58–60, and 82–84 each bind 5-amino-6-(D-ribitylamino)uracil; these read AFE and AII. 87–88 is a (2S)-2-hydroxy-3-oxobutyl phosphate binding site; that stretch reads ST. Catalysis depends on His-90, which acts as the Proton donor. A 5-amino-6-(D-ribitylamino)uracil-binding site is contributed by Phe-115. Arg-129 provides a ligand contact to (2S)-2-hydroxy-3-oxobutyl phosphate.

It belongs to the DMRL synthase family.

The catalysed reaction is (2S)-2-hydroxy-3-oxobutyl phosphate + 5-amino-6-(D-ribitylamino)uracil = 6,7-dimethyl-8-(1-D-ribityl)lumazine + phosphate + 2 H2O + H(+). The protein operates within cofactor biosynthesis; riboflavin biosynthesis; riboflavin from 2-hydroxy-3-oxobutyl phosphate and 5-amino-6-(D-ribitylamino)uracil: step 1/2. In terms of biological role, catalyzes the formation of 6,7-dimethyl-8-ribityllumazine by condensation of 5-amino-6-(D-ribitylamino)uracil with 3,4-dihydroxy-2-butanone 4-phosphate. This is the penultimate step in the biosynthesis of riboflavin. The polypeptide is 6,7-dimethyl-8-ribityllumazine synthase (Chlorobium luteolum (strain DSM 273 / BCRC 81028 / 2530) (Pelodictyon luteolum)).